A 597-amino-acid polypeptide reads, in one-letter code: Elongation factor 4 (597 aa).

The 183-residue stretch at 2 to 184 (KNIRNFSIIA…EIVHKIPAPE (183 aa)) folds into the tr-type G domain. GTP contacts are provided by residues 14 to 19 (DHGKST) and 131 to 134 (NKID).

Belongs to the TRAFAC class translation factor GTPase superfamily. Classic translation factor GTPase family. LepA subfamily.

The protein resides in the cell inner membrane. It catalyses the reaction GTP + H2O = GDP + phosphate + H(+). Its function is as follows. Required for accurate and efficient protein synthesis under certain stress conditions. May act as a fidelity factor of the translation reaction, by catalyzing a one-codon backward translocation of tRNAs on improperly translocated ribosomes. Back-translocation proceeds from a post-translocation (POST) complex to a pre-translocation (PRE) complex, thus giving elongation factor G a second chance to translocate the tRNAs correctly. Binds to ribosomes in a GTP-dependent manner. This is Elongation factor 4 from Actinobacillus succinogenes (strain ATCC 55618 / DSM 22257 / CCUG 43843 / 130Z).